The primary structure comprises 559 residues: Germacrene A synthase (559 aa).

Asp312, Asp316, Asp456, Thr460, and Glu464 together coordinate Mg(2+). A DDXXD motif motif is present at residues 312–316; the sequence is DDTYD.

This sequence belongs to the terpene synthase family. Monomer. Requires Mg(2+) as cofactor. In terms of tissue distribution, expressed in glandular trichomes of all aerial tissues, with highest levels in tissues accumulating parthenolide (e.g. flowers and, to some extent, leaves).

It catalyses the reaction (2E,6E)-farnesyl diphosphate = (+)-(R)-germacrene A + diphosphate. It participates in secondary metabolite biosynthesis; terpenoid biosynthesis. Its function is as follows. Sesquiterpene synthase involved in germacrene A biosynthesis. Germacrene A is a precursor of several sesquiterpene lactones. This Tanacetum parthenium (Feverfew) protein is Germacrene A synthase.